We begin with the raw amino-acid sequence, 290 residues long: Ribosomal RNA small subunit methyltransferase A (290 aa).

S-adenosyl-L-methionine is bound by residues Asn27, Leu29, Gly54, Glu75, Asp100, and Asn125.

It belongs to the class I-like SAM-binding methyltransferase superfamily. rRNA adenine N(6)-methyltransferase family. RsmA subfamily.

It is found in the cytoplasm. The catalysed reaction is adenosine(1518)/adenosine(1519) in 16S rRNA + 4 S-adenosyl-L-methionine = N(6)-dimethyladenosine(1518)/N(6)-dimethyladenosine(1519) in 16S rRNA + 4 S-adenosyl-L-homocysteine + 4 H(+). Functionally, specifically dimethylates two adjacent adenosines (A1518 and A1519) in the loop of a conserved hairpin near the 3'-end of 16S rRNA in the 30S particle. May play a critical role in biogenesis of 30S subunits. The chain is Ribosomal RNA small subunit methyltransferase A from Streptococcus pyogenes serotype M18 (strain MGAS8232).